The following is a 535-amino-acid chain: Phosphoenolpyruvate carboxykinase (ATP) (535 aa).

3 residues coordinate substrate: Arg-59, Tyr-201, and Lys-207. ATP is bound by residues Lys-207, His-226, and 243–251; that span reads GLSGTGKTT. Mn(2+) is bound by residues Lys-207 and His-226. Residue Asp-264 coordinates Mn(2+). ATP is bound by residues Glu-292, Arg-328, 444-445, and Thr-450; that span reads RI. Arg-328 lines the substrate pocket.

Belongs to the phosphoenolpyruvate carboxykinase (ATP) family. Requires Mn(2+) as cofactor.

Its subcellular location is the cytoplasm. It catalyses the reaction oxaloacetate + ATP = phosphoenolpyruvate + ADP + CO2. The protein operates within carbohydrate biosynthesis; gluconeogenesis. Involved in the gluconeogenesis. Catalyzes the conversion of oxaloacetate (OAA) to phosphoenolpyruvate (PEP) through direct phosphoryl transfer between the nucleoside triphosphate and OAA. The polypeptide is Phosphoenolpyruvate carboxykinase (ATP) (Bacteroides thetaiotaomicron (strain ATCC 29148 / DSM 2079 / JCM 5827 / CCUG 10774 / NCTC 10582 / VPI-5482 / E50)).